The chain runs to 213 residues: MTDFRQDFLKFSLAQNVLKFGEFTTKAGRRSPYFFNAGLFNDGLSTLQLAKFYAQSIIESGIRFDMLFGPAYKGIILAAATAMMLAEKGVNVPFAYNRKEAKDHGEGGVLVGAPLKGRVLIIDDVISAGTSVRESIKLIEAEGATPAGVAIALDRMEKGTGELSAVQEVEKQYGLPVAPIASLNDLFILLQNNPEFGQFLEPVRAYRRQYGVE.

Residue Lys26 participates in 5-phospho-alpha-D-ribose 1-diphosphate binding. Residue 34–35 (FF) coordinates orotate. 5-phospho-alpha-D-ribose 1-diphosphate is bound by residues 72-73 (YK), Arg98, Lys99, Lys102, His104, and 123-131 (DDVISAGTS). Ser127 and Arg155 together coordinate orotate.

It belongs to the purine/pyrimidine phosphoribosyltransferase family. PyrE subfamily. In terms of assembly, homodimer. Mg(2+) serves as cofactor.

The enzyme catalyses orotidine 5'-phosphate + diphosphate = orotate + 5-phospho-alpha-D-ribose 1-diphosphate. It participates in pyrimidine metabolism; UMP biosynthesis via de novo pathway; UMP from orotate: step 1/2. Functionally, catalyzes the transfer of a ribosyl phosphate group from 5-phosphoribose 1-diphosphate to orotate, leading to the formation of orotidine monophosphate (OMP). This Neisseria meningitidis serogroup A / serotype 4A (strain DSM 15465 / Z2491) protein is Orotate phosphoribosyltransferase.